A 207-amino-acid polypeptide reads, in one-letter code: ATP-dependent dethiobiotin synthetase BioD (207 aa).

Residue 11–16 participates in ATP binding; sequence DVGKTF. Thr15 is a Mg(2+) binding site. Lys31 is an active-site residue. Residue Ser35 coordinates substrate. ATP-binding positions include Asp42, 95–98, and 155–156; these read ETSG and NQ. Residues Asp42 and Glu95 each coordinate Mg(2+).

Belongs to the dethiobiotin synthetase family. As to quaternary structure, homodimer. The cofactor is Mg(2+).

Its subcellular location is the cytoplasm. The catalysed reaction is (7R,8S)-7,8-diammoniononanoate + CO2 + ATP = (4R,5S)-dethiobiotin + ADP + phosphate + 3 H(+). The protein operates within cofactor biosynthesis; biotin biosynthesis; biotin from 7,8-diaminononanoate: step 1/2. Functionally, catalyzes a mechanistically unusual reaction, the ATP-dependent insertion of CO2 between the N7 and N8 nitrogen atoms of 7,8-diaminopelargonic acid (DAPA, also called 7,8-diammoniononanoate) to form a ureido ring. The chain is ATP-dependent dethiobiotin synthetase BioD from Chlamydia abortus (strain DSM 27085 / S26/3) (Chlamydophila abortus).